A 113-amino-acid polypeptide reads, in one-letter code: Pro-corazonin (113 aa).

Residues 1–19 (MATNITMFLIVITLTSVAA) form the signal peptide. The residue at position 20 (Gln20) is a Pyrrolidone carboxylic acid. The residue at position 30 (Asn30) is an Asparagine amide. The segment at 74 to 96 (LGPCDTSKTRSTTNPSDTNTSAV) is disordered. Residues 82–96 (TRSTTNPSDTNTSAV) show a composition bias toward polar residues.

The protein belongs to the corazonin family. In terms of tissue distribution, four pairs of lateral neurosecretory cells in the brains of late instar larvae, pupae and adults.

It is found in the secreted. Cardioactive peptide. Corazonin is probably involved in the physiological regulation of the heart beat. The sequence is that of Pro-corazonin from Galleria mellonella (Greater wax moth).